A 335-amino-acid chain; its full sequence is Nucleoid-associated protein Pput_1012 (335 aa).

Belongs to the YejK family.

Its subcellular location is the cytoplasm. It localises to the nucleoid. This chain is Nucleoid-associated protein Pput_1012, found in Pseudomonas putida (strain ATCC 700007 / DSM 6899 / JCM 31910 / BCRC 17059 / LMG 24140 / F1).